Reading from the N-terminus, the 473-residue chain is TOX high mobility group box family member 2 (473 aa).

Disordered stretches follow at residues 1–42 (MSDG…SLLH), 139–211 (GLRS…VSAY), 277–302 (SKSP…PPKQ), and 340–473 (LLPG…PSAR). The span at 8–20 (LLSTSQTYNSQGE) shows a compositional bias: polar residues. The tract at residues 25-63 (YEIPPITPPNLPEPSLLHLGDHEAGYHSLCHGLAPNGLL) is required for transcriptional activation. Positions 153-164 (GSKSATPSPSSS) are enriched in low complexity. Residues 171–188 (DAHFKISGEKRPSTDPGK) show a composition bias toward basic and acidic residues. Residues 172–201 (AHFKISGEKRPSTDPGKKAKNPKKKKKKDP) carry the Nuclear localization signal motif. A compositionally biased stretch (basic residues) spans 189-199 (KAKNPKKKKKK). Residues 204–272 (PQKPVSAYAL…EYLKALAAYR (69 aa)) constitute a DNA-binding region (HMG box). 2 stretches are compositionally biased toward low complexity: residues 373 to 382 (LLSPPLSMSP) and 415 to 440 (SDFP…WDGS). The segment covering 463–473 (SPKNLQEPSAR) has biased composition (polar residues).

In terms of tissue distribution, highly expressed in ovary, where it is restricted to undifferentiated granulosa cells. Expressed in hypothalamus, pituitary gland, testis and uterus.

It is found in the nucleus. Functionally, putative transcriptional activator involved in the hypothalamo-pituitary-gonadal system. In Rattus norvegicus (Rat), this protein is TOX high mobility group box family member 2 (Tox2).